Here is a 472-residue protein sequence, read N- to C-terminus: Adenosylhomocysteinase (472 aa).

Thr-64, Asp-138, and Glu-198 together coordinate substrate. 199-201 (TTT) serves as a coordination point for NAD(+). Substrate-binding residues include Lys-228 and Asp-232. NAD(+)-binding positions include Asn-233, 262–267 (GFGDVG), Glu-285, Asn-320, 341–343 (IGH), and Asn-386.

This sequence belongs to the adenosylhomocysteinase family. NAD(+) is required as a cofactor.

It localises to the cytoplasm. The enzyme catalyses S-adenosyl-L-homocysteine + H2O = L-homocysteine + adenosine. It participates in amino-acid biosynthesis; L-homocysteine biosynthesis; L-homocysteine from S-adenosyl-L-homocysteine: step 1/1. Its function is as follows. May play a key role in the regulation of the intracellular concentration of adenosylhomocysteine. This is Adenosylhomocysteinase from Prochlorococcus marinus (strain MIT 9312).